Consider the following 448-residue polypeptide: Phosphoglucosamine mutase (448 aa).

The active-site Phosphoserine intermediate is the serine 100. Mg(2+) contacts are provided by serine 100, aspartate 240, aspartate 242, and aspartate 244. Position 100 is a phosphoserine (serine 100).

Belongs to the phosphohexose mutase family. It depends on Mg(2+) as a cofactor. Activated by phosphorylation.

It catalyses the reaction alpha-D-glucosamine 1-phosphate = D-glucosamine 6-phosphate. Its function is as follows. Catalyzes the conversion of glucosamine-6-phosphate to glucosamine-1-phosphate. This Clostridium perfringens (strain ATCC 13124 / DSM 756 / JCM 1290 / NCIMB 6125 / NCTC 8237 / Type A) protein is Phosphoglucosamine mutase.